The chain runs to 887 residues: Beta-galactosidase 9 (887 aa).

An N-terminal signal peptide occupies residues M1 to G30. A glycan (N-linked (GlcNAc...) asparagine) is linked at N37. E194 serves as the catalytic Proton donor. E263 serves as the catalytic Nucleophile. N-linked (GlcNAc...) asparagine glycosylation is found at N463, N485, N496, N527, and N785. Residues N791 to S877 form the SUEL-type lectin domain. N881 carries N-linked (GlcNAc...) asparagine glycosylation.

This sequence belongs to the glycosyl hydrolase 35 family. As to expression, ubiquitous, with higher expression levels in siliques.

The protein localises to the secreted. It localises to the extracellular space. The protein resides in the apoplast. It catalyses the reaction Hydrolysis of terminal non-reducing beta-D-galactose residues in beta-D-galactosides.. The polypeptide is Beta-galactosidase 9 (BGAL9) (Arabidopsis thaliana (Mouse-ear cress)).